The primary structure comprises 192 residues: Endoribonuclease YbeY (192 aa).

Residues His-109, His-113, and His-119 each coordinate Zn(2+). Residues Val-142–Arg-192 form a disordered region. A compositionally biased stretch (low complexity) spans Thr-159–Gly-180.

Belongs to the endoribonuclease YbeY family. The cofactor is Zn(2+).

It localises to the cytoplasm. Functionally, single strand-specific metallo-endoribonuclease involved in late-stage 70S ribosome quality control and in maturation of the 3' terminus of the 16S rRNA. This Anaeromyxobacter sp. (strain Fw109-5) protein is Endoribonuclease YbeY.